The sequence spans 137 residues: Cellular retinoic acid-binding protein 1 (137 aa).

The short motif at 21-31 (KALGVNAMLRK) is the Nuclear localization signal element. Residue 132-134 (RIY) participates in all-trans-retinoate binding.

This sequence belongs to the calycin superfamily. Fatty-acid binding protein (FABP) family.

It localises to the cytoplasm. Functionally, cytosolic CRABPs may regulate the access of retinoic acid to the nuclear retinoic acid receptors. In Homo sapiens (Human), this protein is Cellular retinoic acid-binding protein 1 (CRABP1).